The chain runs to 528 residues: Ecdysteroid UDP-glucosyltransferase (528 aa).

Positions Met1–Ala32 are cleaved as a signal peptide.

Belongs to the UDP-glycosyltransferase family.

In terms of biological role, catalyzes the transfer of glucose from UDP-glucose to ecdysteroids which are insect molting hormones. Expression of egt interferes with normal insect development and block molting. This chain is Ecdysteroid UDP-glucosyltransferase (EGT), found in Mamestra brassicae nuclear polyhedrosis virus (MbNPV).